The following is a 293-amino-acid chain: Homoserine O-acetyltransferase (293 aa).

C141 (acyl-thioester intermediate) is an active-site residue. Residues K162 and S190 each contribute to the substrate site. H234 functions as the Proton acceptor in the catalytic mechanism. The active site involves E236. R248 is a binding site for substrate.

It belongs to the MetA family.

It localises to the cytoplasm. The enzyme catalyses L-homoserine + acetyl-CoA = O-acetyl-L-homoserine + CoA. It functions in the pathway amino-acid biosynthesis; L-methionine biosynthesis via de novo pathway; O-acetyl-L-homoserine from L-homoserine: step 1/1. In terms of biological role, transfers an acetyl group from acetyl-CoA to L-homoserine, forming acetyl-L-homoserine. The chain is Homoserine O-acetyltransferase from Campylobacter jejuni subsp. jejuni serotype O:2 (strain ATCC 700819 / NCTC 11168).